A 207-amino-acid chain; its full sequence is Small ribosomal subunit protein uS4 (207 aa).

Residues 98-164 (RRLDNVVYRM…AKFKNLVEVN (67 aa)) enclose the S4 RNA-binding domain.

It belongs to the universal ribosomal protein uS4 family. Part of the 30S ribosomal subunit. Contacts protein S5. The interaction surface between S4 and S5 is involved in control of translational fidelity.

Functionally, one of the primary rRNA binding proteins, it binds directly to 16S rRNA where it nucleates assembly of the body of the 30S subunit. In terms of biological role, with S5 and S12 plays an important role in translational accuracy. The sequence is that of Small ribosomal subunit protein uS4 from Clostridioides difficile (strain 630) (Peptoclostridium difficile).